The sequence spans 245 residues: tRNA pseudouridine synthase A (245 aa).

The active-site Nucleophile is the aspartate 52. Substrate is bound at residue tyrosine 111.

The protein belongs to the tRNA pseudouridine synthase TruA family. Homodimer.

The enzyme catalyses uridine(38/39/40) in tRNA = pseudouridine(38/39/40) in tRNA. Functionally, formation of pseudouridine at positions 38, 39 and 40 in the anticodon stem and loop of transfer RNAs. This Rickettsia rickettsii (strain Iowa) protein is tRNA pseudouridine synthase A.